The following is a 198-amino-acid chain: uncharacterized protein (198 aa).

The first 28 residues, 1–28 (MHPTQRKLMKRIILFLSLLFCIACPAIA), serve as a signal peptide directing secretion.

Belongs to the fimbrial protein family.

Its subcellular location is the fimbrium. Its function is as follows. Part of the yadCKLM-htrE-yadVN fimbrial operon. Could contribute to adhesion to various surfaces in specific environmental niches. This is an uncharacterized protein from Escherichia coli (strain K12).